The primary structure comprises 377 residues: D-alanine--D-alanine ligase (377 aa).

An ATP-grasp domain is found at 140–349 (KELLTVNNIR…NVELVDKLID (210 aa)). 170–225 (VKDLGDVVFVKAANQGSSVGVSRAKTADEFEAALTDSFQYDYKVLIEAAVKGPREL) contributes to the ATP binding site. Mg(2+) is bound by residues Asp-303, Glu-316, and Asn-318.

The protein belongs to the D-alanine--D-alanine ligase family. It depends on Mg(2+) as a cofactor. Requires Mn(2+) as cofactor.

It is found in the cytoplasm. It carries out the reaction 2 D-alanine + ATP = D-alanyl-D-alanine + ADP + phosphate + H(+). It participates in cell wall biogenesis; peptidoglycan biosynthesis. In terms of biological role, cell wall formation. The polypeptide is D-alanine--D-alanine ligase (Leuconostoc citreum (strain KM20)).